We begin with the raw amino-acid sequence, 116 residues long: Large ribosomal subunit protein bL17 (116 aa).

Belongs to the bacterial ribosomal protein bL17 family. In terms of assembly, part of the 50S ribosomal subunit. Contacts proteins L3 and L32.

Binds to the 23S rRNA. This is Large ribosomal subunit protein bL17 from Deinococcus radiodurans (strain ATCC 13939 / DSM 20539 / JCM 16871 / CCUG 27074 / LMG 4051 / NBRC 15346 / NCIMB 9279 / VKM B-1422 / R1).